Consider the following 362-residue polypeptide: Carbamoyl phosphate synthase small chain (362 aa).

The segment at 1-172 (MKAFLVLDNG…SKYIFGTHTG (172 aa)) is CPSase. 3 residues coordinate L-glutamine: Ser45, Gly224, and Gly226. The 187-residue stretch at 176-362 (KLAVYDYGVK…YDLVEKTKKG (187 aa)) folds into the Glutamine amidotransferase type-1 domain. Cys252 serves as the catalytic Nucleophile. 5 residues coordinate L-glutamine: Leu253, Gln256, Asn294, Gly296, and Phe297. Residues His335 and Glu337 contribute to the active site.

Belongs to the CarA family. As to quaternary structure, composed of two chains; the small (or glutamine) chain promotes the hydrolysis of glutamine to ammonia, which is used by the large (or ammonia) chain to synthesize carbamoyl phosphate. Tetramer of heterodimers (alpha,beta)4.

It carries out the reaction hydrogencarbonate + L-glutamine + 2 ATP + H2O = carbamoyl phosphate + L-glutamate + 2 ADP + phosphate + 2 H(+). It catalyses the reaction L-glutamine + H2O = L-glutamate + NH4(+). The protein operates within amino-acid biosynthesis; L-arginine biosynthesis; carbamoyl phosphate from bicarbonate: step 1/1. It functions in the pathway pyrimidine metabolism; UMP biosynthesis via de novo pathway; (S)-dihydroorotate from bicarbonate: step 1/3. In terms of biological role, small subunit of the glutamine-dependent carbamoyl phosphate synthetase (CPSase). CPSase catalyzes the formation of carbamoyl phosphate from the ammonia moiety of glutamine, carbonate, and phosphate donated by ATP, constituting the first step of 2 biosynthetic pathways, one leading to arginine and/or urea and the other to pyrimidine nucleotides. The small subunit (glutamine amidotransferase) binds and cleaves glutamine to supply the large subunit with the substrate ammonia. The sequence is that of Carbamoyl phosphate synthase small chain from Leptospira interrogans serogroup Icterohaemorrhagiae serovar Lai (strain 56601).